The primary structure comprises 440 residues: UPF0761 membrane protein Rru_A2625 (440 aa).

Transmembrane regions (helical) follow at residues 29–49 (ILAT…THDI), 61–81 (LLAL…FPGF), 117–137 (GLTA…LLTI), 157–177 (LLVY…SFSL), 201–221 (PTLG…MLVP), 224–244 (PVPL…SALL), and 264–284 (ALAA…VVLM).

The protein belongs to the UPF0761 family.

The protein resides in the cell inner membrane. The chain is UPF0761 membrane protein Rru_A2625 from Rhodospirillum rubrum (strain ATCC 11170 / ATH 1.1.1 / DSM 467 / LMG 4362 / NCIMB 8255 / S1).